A 407-amino-acid polypeptide reads, in one-letter code: Phosphopentomutase (407 aa).

Positions 11, 305, 310, 346, 347, and 358 each coordinate Mn(2+).

The protein belongs to the phosphopentomutase family. Requires Mn(2+) as cofactor.

It is found in the cytoplasm. It carries out the reaction 2-deoxy-alpha-D-ribose 1-phosphate = 2-deoxy-D-ribose 5-phosphate. The enzyme catalyses alpha-D-ribose 1-phosphate = D-ribose 5-phosphate. It participates in carbohydrate degradation; 2-deoxy-D-ribose 1-phosphate degradation; D-glyceraldehyde 3-phosphate and acetaldehyde from 2-deoxy-alpha-D-ribose 1-phosphate: step 1/2. Isomerase that catalyzes the conversion of deoxy-ribose 1-phosphate (dRib-1-P) and ribose 1-phosphate (Rib-1-P) to deoxy-ribose 5-phosphate (dRib-5-P) and ribose 5-phosphate (Rib-5-P), respectively. This Legionella pneumophila (strain Lens) protein is Phosphopentomutase.